Reading from the N-terminus, the 147-residue chain is 3-hydroxyacyl-[acyl-carrier-protein] dehydratase FabZ (147 aa).

The active site involves His49.

This sequence belongs to the thioester dehydratase family. FabZ subfamily.

The protein resides in the cytoplasm. It carries out the reaction a (3R)-hydroxyacyl-[ACP] = a (2E)-enoyl-[ACP] + H2O. In terms of biological role, involved in unsaturated fatty acids biosynthesis. Catalyzes the dehydration of short chain beta-hydroxyacyl-ACPs and long chain saturated and unsaturated beta-hydroxyacyl-ACPs. This Syntrophotalea carbinolica (strain DSM 2380 / NBRC 103641 / GraBd1) (Pelobacter carbinolicus) protein is 3-hydroxyacyl-[acyl-carrier-protein] dehydratase FabZ.